The primary structure comprises 147 residues: Thyrotropin subunit beta (147 aa).

The N-terminal stretch at 1 to 20 (MELSVAMYGLLCLLFSQAVP) is a signal peptide. 6 disulfides stabilise this stretch: Cys-22–Cys-72, Cys-36–Cys-87, Cys-39–Cys-127, Cys-47–Cys-103, Cys-51–Cys-105, and Cys-108–Cys-115. Asn-43 carries an N-linked (GlcNAc...) asparagine glycan.

The protein belongs to the glycoprotein hormones subunit beta family. As to quaternary structure, heterodimer of a common alpha chain and a unique beta chain which confers biological specificity to thyrotropin, lutropin, follitropin and gonadotropin. Pituitary gland. Higher levels seen in immature fishes than the mature fishes.

The protein resides in the secreted. Indispensable for the control of thyroid structure and metabolism. May play some role in the biological processes of the immature fishes. The polypeptide is Thyrotropin subunit beta (tshb) (Oncorhynchus mykiss (Rainbow trout)).